Consider the following 245-residue polypeptide: 14-3-3 protein zeta/delta (245 aa).

An N-acetylmethionine modification is found at Met-1. The residue at position 3 (Lys-3) is an N6-acetyllysine. Ser-58 is modified (phosphoserine; by PKA). Lys-68 is modified (N6-acetyllysine). Phosphoserine occurs at positions 184, 207, and 210. A Phosphothreonine; by CK1 modification is found at Thr-232.

Belongs to the 14-3-3 family. In terms of assembly, homodimer. Heterodimerizes with YWHAE. Homo- and heterodimerization is inhibited by phosphorylation on Ser-58. Interacts with FOXO4, NOXA1, SSH1 ARHGEF2, CDK16 and BSPRY. Interacts with WEE1 (C-terminal). Interacts with MLF1 (phosphorylated form); the interaction retains it in the cytoplasm. Interacts with BAX; the interaction occurs in the cytoplasm. Under stress conditions, MAPK8-mediated phosphorylation releases BAX to mitochondria. Interacts with TP53; the interaction enhances p53 transcriptional activity. The Ser-58 phosphorylated form inhibits this interaction and p53 transcriptional activity. Interacts with ABL1 (phosphorylated form); the interaction retains ABL1 in the cytoplasm. Interacts with PKA-phosphorylated AANAT; the interaction modulates AANAT enzymatic activity by increasing affinity for arylalkylamines and acetyl-CoA and protecting the enzyme from dephosphorylation and proteasomal degradation. It may also prevent thiol-dependent inactivation. Interacts with AKT1; the interaction phosphorylates YWHAZ and modulates dimerization. Interacts with GAB2. Interacts with BCL2L11, SAMSN1 and TLK2. Interacts with phosphorylated RAF1; the interaction is inhibited when YWHAZ is phosphorylated on Thr-232. Interacts with Thr-phosphorylated ITGB2. Interacts with the 'Thr-369' phosphorylated form of DAPK2. Interacts with PI4KB, TBC1D22A and TBC1D22B. Interacts with ZFP36L1 (via phosphorylated form); this interaction occurs in a p38 MAPK- and AKT-signaling pathways. Interacts with SLITRK1. Interacts with AK5, LDB1, MADD, MARK3, PDE1A and SMARCB1. Interacts with YWHAZ. Interacts with MEFV. Interacts with ADAM22 (via C-terminus). Post-translationally, the delta, brain-specific form differs from the zeta form in being phosphorylated. Phosphorylation on Ser-184 by MAPK8; promotes dissociation of BAX and translocation of BAX to mitochondria. Phosphorylation on Thr-232; inhibits binding of RAF1. Phosphorylated on Ser-58 by PKA and protein kinase C delta type catalytic subunit in a sphingosine-dependent fashion. Phosphorylation on Ser-58 by PKA; disrupts homodimerization and heterodimerization with YHAE and TP53.

The protein resides in the cytoplasm. The protein localises to the melanosome. In terms of biological role, adapter protein implicated in the regulation of a large spectrum of both general and specialized signaling pathways. Binds to a large number of partners, usually by recognition of a phosphoserine or phosphothreonine motif. Binding generally results in the modulation of the activity of the binding partner. Promotes cytosolic retention and inactivation of TFEB transcription factor by binding to phosphorylated TFEB. Induces ARHGEF7 activity on RAC1 as well as lamellipodia and membrane ruffle formation. In neurons, regulates spine maturation through the modulation of ARHGEF7 activity. The polypeptide is 14-3-3 protein zeta/delta (YWHAZ) (Bos taurus (Bovine)).